A 177-amino-acid polypeptide reads, in one-letter code: Large ribosomal subunit protein uL6 (177 aa).

Belongs to the universal ribosomal protein uL6 family. Part of the 50S ribosomal subunit.

In terms of biological role, this protein binds to the 23S rRNA, and is important in its secondary structure. It is located near the subunit interface in the base of the L7/L12 stalk, and near the tRNA binding site of the peptidyltransferase center. This chain is Large ribosomal subunit protein uL6, found in Rickettsia africae (strain ESF-5).